A 300-amino-acid polypeptide reads, in one-letter code: 17-beta-hydroxysteroid dehydrogenase 13 (300 aa).

Positions Met1 to Leu19 are cleaved as a signal peptide. Ser33 carries the phosphoserine modification. NAD(+) is bound at residue Leu40 to Asp67. Ser69 bears the Phosphoserine mark. Lys79 is modified (N6-acetyllysine). Ser172 provides a ligand contact to substrate. Catalysis depends on Tyr185, which acts as the Proton acceptor. Lys189 provides a ligand contact to NAD(+).

Belongs to the short-chain dehydrogenases/reductases (SDR) family.

It localises to the lipid droplet. The protein localises to the endoplasmic reticulum. It catalyses the reaction 17beta-estradiol + NAD(+) = estrone + NADH + H(+). It carries out the reaction all-trans-retinol + NAD(+) = all-trans-retinal + NADH + H(+). The catalysed reaction is all-trans-retinal + NAD(+) + H2O = all-trans-retinoate + NADH + 2 H(+). Plays a pivotal role in hepatic lipid metabolism. In vitro, it catalyzes the oxidation of a variety of lipid substrates, including 17beta-estradiol, retinol, retinal, and leukotriene B4. The sequence is that of 17-beta-hydroxysteroid dehydrogenase 13 (Hsd17b13) from Rattus norvegicus (Rat).